The chain runs to 235 residues: Uridylate kinase (235 aa).

8 to 11 provides a ligand contact to ATP; the sequence is KFSG. Positions 16–21 are involved in allosteric activation by GTP; that stretch reads GAEGYG. Residue glycine 50 coordinates UMP. ATP contacts are provided by glycine 51 and arginine 55. Residues aspartate 71 and 132–139 contribute to the UMP site; that span reads TGNPYFTT. Positions 159, 165, and 168 each coordinate ATP.

Belongs to the UMP kinase family. In terms of assembly, homohexamer.

The protein localises to the cytoplasm. It carries out the reaction UMP + ATP = UDP + ADP. It participates in pyrimidine metabolism; CTP biosynthesis via de novo pathway; UDP from UMP (UMPK route): step 1/1. Allosterically activated by GTP. Inhibited by UTP. Catalyzes the reversible phosphorylation of UMP to UDP. The chain is Uridylate kinase from Aliarcobacter butzleri (strain RM4018) (Arcobacter butzleri).